We begin with the raw amino-acid sequence, 456 residues long: NADH-quinone oxidoreductase subunit N (456 aa).

Transmembrane regions (helical) follow at residues 6–26, 45–65, 75–95, 97–117, 118–138, 151–171, 181–201, 220–240, 252–272, 281–301, 308–328, 355–375, 382–402, and 426–446; these read LFAL…MLLA, VAAL…GALF, TAYA…AGVA, EAPA…GAGH, AATL…LFAF, FLVM…LIYA, WVGH…GLAF, PAGA…IAIL, LWSA…NVLA, MLGY…ASGA, VLFY…ASAM, GLLS…LYLF, ESWI…YYYI, and LLLI…LVLI.

This sequence belongs to the complex I subunit 2 family. As to quaternary structure, NDH-1 is composed of 14 different subunits. Subunits NuoA, H, J, K, L, M, N constitute the membrane sector of the complex.

Its subcellular location is the cell inner membrane. The enzyme catalyses a quinone + NADH + 5 H(+)(in) = a quinol + NAD(+) + 4 H(+)(out). NDH-1 shuttles electrons from NADH, via FMN and iron-sulfur (Fe-S) centers, to quinones in the respiratory chain. The immediate electron acceptor for the enzyme in this species is believed to be ubiquinone. Couples the redox reaction to proton translocation (for every two electrons transferred, four hydrogen ions are translocated across the cytoplasmic membrane), and thus conserves the redox energy in a proton gradient. The sequence is that of NADH-quinone oxidoreductase subunit N from Rhodopseudomonas palustris (strain BisA53).